A 496-amino-acid polypeptide reads, in one-letter code: L-carnitine dehydrogenase/betainyl-CoA thioesterase (496 aa).

The L-carnitine dehydrogenase stretch occupies residues Met1–Pro335. NAD(+) is bound at residue Gly11 to Gly16. The interval Ser336–Arg496 is betainyl-CoA thioesterase.

It in the N-terminal section; belongs to the 3-hydroxyacyl-CoA dehydrogenase family. L-carnitine dehydrogenase subfamily. In the C-terminal section; belongs to the betainyl-CoA thioesterase family. Homodimer.

The protein resides in the cytoplasm. It carries out the reaction carnitine + NAD(+) = 3-dehydrocarnitine + NADH + H(+). The catalysed reaction is N,N,N-trimethylglycyl-CoA + H2O = glycine betaine + CoA + H(+). It functions in the pathway amine and polyamine metabolism; carnitine metabolism. Its function is as follows. Multifunctional enzyme that catalyzes the NAD(+)-dependent oxidation of L-carnitine to 3-dehydrocarnitine and the cleavage of betainyl-CoA (N,N,N-trimethylglycyl-CoA) into glycine betaine and coenzyme A. Can also hydrolyze L-carnitinyl-CoA, but with much lower efficiency. Is involved in a L-carnitine degradation pathway that allows R.meliloti to grow on L-carnitine as the sole source of carbon and nitrogen. This chain is L-carnitine dehydrogenase/betainyl-CoA thioesterase, found in Rhizobium meliloti (strain 1021) (Ensifer meliloti).